The following is a 476-amino-acid chain: Cytochrome P450 6B5 (476 aa).

A heme-binding site is contributed by cysteine 443.

The protein belongs to the cytochrome P450 family. Heme is required as a cofactor.

Its subcellular location is the endoplasmic reticulum membrane. It is found in the microsome membrane. The catalysed reaction is an organic molecule + reduced [NADPH--hemoprotein reductase] + O2 = an alcohol + oxidized [NADPH--hemoprotein reductase] + H2O + H(+). Its function is as follows. Enables the insect to feed on furanocoumarin-producing plants and evolved as an adaptation for detoxification of xanthotoxin and other furanocoumarins. This is Cytochrome P450 6B5 (CYP6B5) from Papilio glaucus (Eastern tiger swallowtail butterfly).